A 208-amino-acid polypeptide reads, in one-letter code: Microcin J25-processing protein McjB (208 aa).

Its subcellular location is the cytoplasm. Its function is as follows. Along with McjC, necessary and sufficient to process the inactive microcin J25 (McjA) precursor into the active peptide. In Escherichia coli, this protein is Microcin J25-processing protein McjB (mcjB).